Consider the following 292-residue polypeptide: Probable endonuclease 4 (292 aa).

Zn(2+)-binding residues include H70, H111, E146, D180, H183, H215, D228, H230, and E260.

Belongs to the AP endonuclease 2 family. Zn(2+) serves as cofactor.

It catalyses the reaction Endonucleolytic cleavage to 5'-phosphooligonucleotide end-products.. Endonuclease IV plays a role in DNA repair. It cleaves phosphodiester bonds at apurinic or apyrimidinic (AP) sites, generating a 3'-hydroxyl group and a 5'-terminal sugar phosphate. The polypeptide is Probable endonuclease 4 (Shouchella clausii (strain KSM-K16) (Alkalihalobacillus clausii)).